We begin with the raw amino-acid sequence, 344 residues long: tRNA N6-adenosine threonylcarbamoyltransferase (344 aa).

Fe cation-binding residues include histidine 119 and histidine 123. Substrate is bound by residues 141–145, aspartate 174, glycine 187, aspartate 191, and asparagine 280; that span reads VVSGG. Aspartate 310 lines the Fe cation pocket.

It belongs to the KAE1 / TsaD family. Requires Fe(2+) as cofactor.

Its subcellular location is the cytoplasm. The catalysed reaction is L-threonylcarbamoyladenylate + adenosine(37) in tRNA = N(6)-L-threonylcarbamoyladenosine(37) in tRNA + AMP + H(+). Required for the formation of a threonylcarbamoyl group on adenosine at position 37 (t(6)A37) in tRNAs that read codons beginning with adenine. Is involved in the transfer of the threonylcarbamoyl moiety of threonylcarbamoyl-AMP (TC-AMP) to the N6 group of A37, together with TsaE and TsaB. TsaD likely plays a direct catalytic role in this reaction. The chain is tRNA N6-adenosine threonylcarbamoyltransferase from Listeria monocytogenes serovar 1/2a (strain ATCC BAA-679 / EGD-e).